The chain runs to 912 residues: Metabotropic glutamate receptor 4 (912 aa).

Residues 1 to 32 form the signal peptide; sequence MSGKGGWAWWWARLPLCLLLSLYGSWVPSSLG. At 33–586 the chain is on the extracellular side; that stretch reads KPKGHPHMNS…PIVKLEWDSP (554 aa). A disulfide bridge links C67 with C109. N-linked (GlcNAc...) asparagine glycosylation occurs at N98. L-glutamate is bound by residues S159, 180-182, and Y230; that span reads AST. 7 disulfide bridges follow: C249-C538, C372-C388, C428-C435, C520-C539, C524-C542, C545-C557, and C560-C573. N301 carries an N-linked (GlcNAc...) asparagine glycan. D312 provides a ligand contact to L-glutamate. Position 405 (K405) interacts with L-glutamate. The helical transmembrane segment at 587–607 threads the bilayer; sequence WAVLPLFLAVVGIAATLFVVV. Over 608 to 624 the chain is Cytoplasmic; it reads TFVRYNDTPIVKASGRE. Residues 625–645 form a helical membrane-spanning segment; sequence LSYVLLAGIFLCYATTFLMIA. Over 646–653 the chain is Extracellular; the sequence is EPDLGTCS. The helical transmembrane segment at 654–671 threads the bilayer; the sequence is LRRIFLGLGMSISYAALL. Over 672–699 the chain is Cytoplasmic; the sequence is TKTNRIYRIFEQGKRSVSAPRFISPASQ. Residues 700–720 traverse the membrane as a helical segment; the sequence is LAITFVLISLQLLCICVWFVV. Over 721–751 the chain is Extracellular; that stretch reads DPSHSVVDFQDQRTLDPRFARGVLKCDISDL. The chain crosses the membrane as a helical span at residues 752–772; sequence SLICLLGYSMLLMVTCTVYAI. Topologically, residues 773 to 786 are cytoplasmic; the sequence is KTRGVPETFNEAKP. The chain crosses the membrane as a helical span at residues 787-807; it reads IGFTMYTTCIVWLAFIPIFFG. Over 808–826 the chain is Extracellular; that stretch reads TSQSADKLYIQTTTLTVSV. The helical transmembrane segment at 827–847 threads the bilayer; the sequence is SLSASVSLGMLYMPKVYIILF. Residues 848–912 lie on the Cytoplasmic side of the membrane; sequence HPEQNVPKRK…TYVTYTNHAI (65 aa).

Belongs to the G-protein coupled receptor 3 family. In terms of assembly, interacts with PICK1.

The protein resides in the cell membrane. Its function is as follows. G-protein coupled receptor for glutamate. Ligand binding causes a conformation change that triggers signaling via guanine nucleotide-binding proteins (G proteins) and modulates the activity of down-stream effectors. Signaling inhibits adenylate cyclase activity. This Mus musculus (Mouse) protein is Metabotropic glutamate receptor 4 (Grm4).